We begin with the raw amino-acid sequence, 263 residues long: Indolethylamine N-methyltransferase (263 aa).

Lysine 13 carries the N6-succinyllysine modification. S-adenosyl-L-methionine-binding positions include tyrosine 20, tyrosine 25, glycine 63, tyrosine 69, aspartate 85–threonine 87, and asparagine 90. Position 96 is an N6-succinyllysine (lysine 96). S-adenosyl-L-methionine contacts are provided by residues aspartate 142–valine 143 and leucine 163.

The protein belongs to the class I-like SAM-binding methyltransferase superfamily. NNMT/PNMT/TEMT family. Monomer. As to expression, widely expressed. The highest levels were in thyroid, adrenal gland, adult and fetal lung. Intermediate levels in heart, placenta, skeletal muscle, testis, small intestine, pancreas, stomach, spinal cord, lymph node and trachea. Very low levels in adult and fetal kidney and liver, in adult spleen, thymus, ovary, colon and bone marrow. Not expressed in peripheral blood leukocytes and brain.

The protein resides in the cytoplasm. The enzyme catalyses a tertiary amine + S-adenosyl-L-methionine = a methylated tertiary amine + S-adenosyl-L-homocysteine + H(+). The catalysed reaction is a secondary amine + S-adenosyl-L-methionine = a methylated secondary amine + S-adenosyl-L-homocysteine + H(+). It carries out the reaction a primary amine + S-adenosyl-L-methionine = a methylated primary amine + S-adenosyl-L-homocysteine + H(+). It catalyses the reaction dimethyl sulfide + S-adenosyl-L-methionine = trimethylsulfonium + S-adenosyl-L-homocysteine. In terms of biological role, functions as a thioether S-methyltransferase and is active with a variety of thioethers and the corresponding selenium and tellurium compounds, including 3-methylthiopropionaldehyde, dimethyl selenide, dimethyl telluride, 2-methylthioethylamine, 2-methylthioethanol, methyl-n-propyl sulfide and diethyl sulfide. Plays an important role in the detoxification of selenium compounds. Catalyzes the N-methylation of tryptamine and structurally related compounds. The polypeptide is Indolethylamine N-methyltransferase (INMT) (Homo sapiens (Human)).